Consider the following 62-residue polypeptide: UPF0337 protein gsr0040 (62 aa).

Basic and acidic residues-rich tracts occupy residues Met1–Gln15 and Asp27–Val62. The disordered stretch occupies residues Met1–Val62.

Belongs to the UPF0337 (CsbD) family.

The chain is UPF0337 protein gsr0040 from Gloeobacter violaceus (strain ATCC 29082 / PCC 7421).